The primary structure comprises 599 residues: Subtilisin-like protease 1 (599 aa).

An N-terminal signal peptide occupies residues 1–20 (MRTVFIYACIISLVLRTIPA). The propeptide at 21 to 195 (HNDLMSKEKE…VESDELVGAD (175 aa)) is inhibition peptide. N-linked (GlcNAc...) asparagine glycosylation occurs at Asn-57. Residues 74–101 (EDAPKEELNKIEMEKKKAEEEAKNSKKK) are a coiled coil. Residues Asn-123, Thr-126, Pro-128, and Gly-183 each contribute to the Ca(2+) site. The N-linked (GlcNAc...) asparagine glycan is linked to Asn-227. Asp-251 contacts Ca(2+). The Peptidase S8 domain maps to 257 to 574 (QWGLDLARLD…GGYIDILNAV (318 aa)). 2 cysteine pairs are disulfide-bonded: Cys-283/Cys-393 and Cys-372/Cys-389. Asp-286 (charge relay system) is an active-site residue. Positions 295, 306, 314, 315, 316, 318, 320, 322, and 323 each coordinate Ca(2+). Asn-331 carries an N-linked (GlcNAc...) asparagine glycan. Catalysis depends on His-342, which acts as the Charge relay system. Ile-353 contacts Ca(2+). An N-linked (GlcNAc...) asparagine glycan is attached at Asn-355. 3 residues coordinate Ca(2+): Asn-356, Ile-358, and Val-360. Asn-402 and Asn-434 each carry an N-linked (GlcNAc...) asparagine glycan. A disulfide bridge connects residues Cys-435 and Cys-448. Ser-519 (charge relay system) is an active-site residue.

Belongs to the peptidase S8 family. In terms of processing, the N-terminal prodomain is cleaved.

It localises to the secreted. The protein localises to the parasitophorous vacuole lumen. It is found in the cytoplasmic vesicle. Its subcellular location is the secretory vesicle. It carries out the reaction Hydrolysis of proteins with broad specificity for peptide bonds, and a preference for a large uncharged residue in P1. Hydrolyzes peptide amides.. Its function is as follows. Mediates the proteolytic maturation of serine protease SERA3. Mediates the proteolytic maturation of MSP1, and thereby may prime the parasite cell surface for invasion of fresh erythrocytes. Required for completion of the parasite pre-erythrocytic stages. Required for hepatic schizont development and merozoite formation. Required for the egress of the hepatic merozoites from the parasitophorous vacuole. Required for parasite infectivity during blood stages. Required for male gamete egress. This Plasmodium berghei (strain Anka) protein is Subtilisin-like protease 1.